Here is a 201-residue protein sequence, read N- to C-terminus: Molybdenum cofactor guanylyltransferase (201 aa).

Residues Leu-15–Gly-17, Lys-28, Asp-74, and Asp-104 each bind GTP. Asp-104 contributes to the Mg(2+) binding site.

This sequence belongs to the MobA family. In terms of assembly, monomer. It depends on Mg(2+) as a cofactor.

Its subcellular location is the cytoplasm. It catalyses the reaction Mo-molybdopterin + GTP + H(+) = Mo-molybdopterin guanine dinucleotide + diphosphate. In terms of biological role, transfers a GMP moiety from GTP to Mo-molybdopterin (Mo-MPT) cofactor (Moco or molybdenum cofactor) to form Mo-molybdopterin guanine dinucleotide (Mo-MGD) cofactor. This chain is Molybdenum cofactor guanylyltransferase, found in Pseudomonas syringae pv. syringae (strain B728a).